The following is a 481-amino-acid chain: Cardiolipin synthase A (481 aa).

The next 2 membrane-spanning stretches (helical) occupy residues 10 to 30 and 40 to 60; these read FFGY…LHAL and IAWA…YLIF. PLD phosphodiesterase domains are found at residues 220–247 and 394–421; these read VNFR…GDEY and QPGF…DNRS. Residues His225, Lys227, Asp232, His399, Lys401, and Asp406 contribute to the active site.

This sequence belongs to the phospholipase D family. Cardiolipin synthase subfamily. ClsA sub-subfamily.

Its subcellular location is the cell inner membrane. The catalysed reaction is 2 a 1,2-diacyl-sn-glycero-3-phospho-(1'-sn-glycerol) = a cardiolipin + glycerol. Catalyzes the reversible phosphatidyl group transfer from one phosphatidylglycerol molecule to another to form cardiolipin (CL) (diphosphatidylglycerol) and glycerol. The chain is Cardiolipin synthase A from Pseudomonas putida (Arthrobacter siderocapsulatus).